Here is a 164-residue protein sequence, read N- to C-terminus: MNIVDQQTFRDAMSCMGAAVNIITTDGPAGRAGFTASAVCSVTDTPPTLLVCLNRGASVWPAFNENRTLCVNTLSAGQEPLSNLFGGKTPMEHRFAAARWQTGVTGCPQLEEALVSFDCRISQVVSVGTHDILFCAIEAIHRHTTPYGLVWFDRSYHALMRPAC.

This sequence belongs to the non-flavoprotein flavin reductase family. RutF subfamily.

The catalysed reaction is FMNH2 + NAD(+) = FMN + NADH + 2 H(+). Catalyzes the reduction of FMN to FMNH2 which is used to reduce pyrimidine by RutA via the Rut pathway. The chain is FMN reductase (NADH) RutF from Escherichia coli (strain K12 / MC4100 / BW2952).